We begin with the raw amino-acid sequence, 78 residues long: Consomatin Nc1 (78 aa).

A signal peptide spans 1 to 22 (MQTAYWVMVMVMVWITAPLSEG). A propeptide spanning residues 23–59 (GKPNDVIRGLVPDDLTPQLILRSLISRRRSDKDVGKR) is cleaved from the precursor. E61 carries the 4-carboxyglutamate modification. A disulfide bridge connects residues C62 and C67. D-tryptophan is present on W64. P70 carries the post-translational modification 4-hydroxyproline. Residues 71–78 (LSRRHDLG) constitute a propeptide that is removed on maturation.

It belongs to the conotoxin C superfamily. Consomatin family. As to expression, expressed by the venom duct.

Its subcellular location is the secreted. Moderately activates human somatostatin receptors (SSTR) with a preferential activation of SSTR1 and SSTR4. In vivo, does not cause behavioral changes in mice within a few minutes of intracranial injection, but causes a progressive loss of movement thereafter. Four to five hours after injection, mice recover, even with the highest dose tested. Shows antinociception and antihyperalgesia activities in two mouse models of acute pain, most probably by acting outside the central nervous system. In Conus neocostatus (Cone snail), this protein is Consomatin Nc1.